The following is a 452-amino-acid chain: Ribosomal protein uS12 methylthiotransferase RimO (452 aa).

An MTTase N-terminal domain is found at 5-116; sequence PTIAFSHLGC…IVDVLQRTES (112 aa). Cysteine 14, cysteine 50, cysteine 79, cysteine 154, cysteine 158, and cysteine 161 together coordinate [4Fe-4S] cluster. Positions 140-369 constitute a Radical SAM core domain; it reads TTTSAVAYLR…MATQQPIAER (230 aa). Positions 372 to 438 constitute a TRAM domain; it reads RAQIGRLVDV…IYDLHGEVAS (67 aa).

This sequence belongs to the methylthiotransferase family. RimO subfamily. It depends on [4Fe-4S] cluster as a cofactor.

It is found in the cytoplasm. The catalysed reaction is L-aspartate(89)-[ribosomal protein uS12]-hydrogen + (sulfur carrier)-SH + AH2 + 2 S-adenosyl-L-methionine = 3-methylsulfanyl-L-aspartate(89)-[ribosomal protein uS12]-hydrogen + (sulfur carrier)-H + 5'-deoxyadenosine + L-methionine + A + S-adenosyl-L-homocysteine + 2 H(+). Its function is as follows. Catalyzes the methylthiolation of an aspartic acid residue of ribosomal protein uS12. In Synechococcus sp. (strain ATCC 27144 / PCC 6301 / SAUG 1402/1) (Anacystis nidulans), this protein is Ribosomal protein uS12 methylthiotransferase RimO.